Consider the following 92-residue polypeptide: Small ribosomal subunit protein uS19 (92 aa).

Belongs to the universal ribosomal protein uS19 family.

Its function is as follows. Protein S19 forms a complex with S13 that binds strongly to the 16S ribosomal RNA. In Corynebacterium aurimucosum (strain ATCC 700975 / DSM 44827 / CIP 107346 / CN-1) (Corynebacterium nigricans), this protein is Small ribosomal subunit protein uS19.